The sequence spans 450 residues: tRNA modification GTPase MnmE (450 aa).

The (6S)-5-formyl-5,6,7,8-tetrahydrofolate site is built by R23, E80, and R123. A TrmE-type G domain is found at 219–372; the sequence is GLHVVLAGQP…LRARLLQMAG (154 aa). N229 contacts K(+). GTP-binding positions include 229 to 234, 248 to 254, and 273 to 276; these read NVGKSS, TPIAGTT, and DTAG. S233 is a Mg(2+) binding site. 3 residues coordinate K(+): T248, I250, and T253. T254 serves as a coordination point for Mg(2+). (6S)-5-formyl-5,6,7,8-tetrahydrofolate is bound at residue K450.

It belongs to the TRAFAC class TrmE-Era-EngA-EngB-Septin-like GTPase superfamily. TrmE GTPase family. In terms of assembly, homodimer. Heterotetramer of two MnmE and two MnmG subunits. It depends on K(+) as a cofactor.

It localises to the cytoplasm. Exhibits a very high intrinsic GTPase hydrolysis rate. Involved in the addition of a carboxymethylaminomethyl (cmnm) group at the wobble position (U34) of certain tRNAs, forming tRNA-cmnm(5)s(2)U34. In Bordetella avium (strain 197N), this protein is tRNA modification GTPase MnmE.